Here is a 925-residue protein sequence, read N- to C-terminus: Nonribosomal peptide synthetase apvA (925 aa).

Residues 15 to 436 are adenylation (A) domain; it reads AREDSGHVVV…TGRAKENMII (422 aa). The Carrier domain occupies 564-644; that stretch reads EPQNDLEKTL…DLATALEKLQ (81 aa). Position 601 is an O-(pantetheine 4'-phosphoryl)serine (S601). Residues 663-909 are thioesterase (TE) domain; it reads PLWLVHPGAG…HYSMIGPDHV (247 aa).

Belongs to the NRP synthetase family. ApvA specifically produces aspulvinone E in hyphea, in contrast to melA which produces aspulvinone E in conidia where it is converted to UV-protective Asp-melanin.

The enzyme catalyses 2 3-(4-hydroxyphenyl)pyruvate + AH2 + 2 ATP + O2 = aspulvinone E + A + 2 AMP + CO2 + 2 diphosphate + H2O + H(+). It functions in the pathway secondary metabolite biosynthesis. In terms of biological role, nonribosomal peptide synthetase; part of the gene cluster that mediates the biosynthesis of aspulvinones. The nonribosomal peptide synthetase apvA is responsible for the production of aspulvinone E, the core structure of aspulvinones. ApvA first activates 4-hydroxyphenylpyruvate (HPPA) through its A domain to AMP-HPPA. The HPPA unit is then loaded to the T domain and eventually transferred to the TE domain. Upon loading of another HPPA unit to the T domain, the TE domain promotes the enolate formation on the unit attached. The next step involves head to tail Claisen condensation, followed by the keto-enol tautermerization and a nucleophilic attack on the carbonyl carbon to yield the furanone partial structure. A spontaneous oxidation at the beta-carbon of the thioester might occur in aerobic condition. The TE domain then catalyzes the hydrolysis of the thioester, followed by spontaneous decarboxylation, dehydroxylation and keto-enol tautermerization to give the aspulvinone core. Aspulvinone E is highly unstable and converted to isoaspulvinone E in the presence of light. The structural diversity of the aspulvinones suggests that other tailoring enzymes are involved and have still to be identified. The chain is Nonribosomal peptide synthetase apvA from Aspergillus terreus (strain NIH 2624 / FGSC A1156).